The primary structure comprises 750 residues: Alpha-galactosidase C (750 aa).

An N-terminal signal peptide occupies residues 1 to 26 (MFRSTATVAAATAMGLLTATGHGSLA). Residues asparagine 58, asparagine 162, asparagine 186, asparagine 194, asparagine 366, asparagine 428, asparagine 432, and asparagine 453 are each glycosylated (N-linked (GlcNAc...) asparagine). Aspartate 511 (nucleophile) is an active-site residue. The Proton donor role is filled by aspartate 573.

It belongs to the glycosyl hydrolase 36 family. Homotetramer. The cofactor is Mg(2+). NAD(+) is required as a cofactor.

The protein localises to the secreted. It carries out the reaction Hydrolysis of terminal, non-reducing alpha-D-galactose residues in alpha-D-galactosides, including galactose oligosaccharides, galactomannans and galactolipids.. In terms of biological role, hydrolyzes a variety of simple alpha-D-galactoside as well as more complex molecules such as oligosaccharides and polysaccharides. Active on paranitrophenyl-alpha-galactoside, raffinose, locust bean gum and gum guar. This chain is Alpha-galactosidase C (aglC), found in Emericella nidulans (strain FGSC A4 / ATCC 38163 / CBS 112.46 / NRRL 194 / M139) (Aspergillus nidulans).